Consider the following 514-residue polypeptide: 2,3-bisphosphoglycerate-independent phosphoglycerate mutase (514 aa).

Residues D13 and S63 each coordinate Mn(2+). S63 (phosphoserine intermediate) is an active-site residue. Residues H124, 154–155 (RD), R186, R192, 258–261 (RADR), and K332 contribute to the substrate site. Positions 399, 403, 440, 441, and 459 each coordinate Mn(2+).

This sequence belongs to the BPG-independent phosphoglycerate mutase family. Monomer. Requires Mn(2+) as cofactor.

The enzyme catalyses (2R)-2-phosphoglycerate = (2R)-3-phosphoglycerate. Its pathway is carbohydrate degradation; glycolysis; pyruvate from D-glyceraldehyde 3-phosphate: step 3/5. In terms of biological role, catalyzes the interconversion of 2-phosphoglycerate and 3-phosphoglycerate. The protein is 2,3-bisphosphoglycerate-independent phosphoglycerate mutase of Legionella pneumophila (strain Lens).